Reading from the N-terminus, the 354-residue chain is tRNA N6-adenosine threonylcarbamoyltransferase (354 aa).

2 residues coordinate Fe cation: His-116 and His-120. Substrate contacts are provided by residues 139–143, Asp-172, Gly-185, and Asn-281; that span reads LVSGG. Position 309 (Asp-309) interacts with Fe cation.

This sequence belongs to the KAE1 / TsaD family. Fe(2+) serves as cofactor.

It localises to the cytoplasm. It carries out the reaction L-threonylcarbamoyladenylate + adenosine(37) in tRNA = N(6)-L-threonylcarbamoyladenosine(37) in tRNA + AMP + H(+). In terms of biological role, required for the formation of a threonylcarbamoyl group on adenosine at position 37 (t(6)A37) in tRNAs that read codons beginning with adenine. Is involved in the transfer of the threonylcarbamoyl moiety of threonylcarbamoyl-AMP (TC-AMP) to the N6 group of A37, together with TsaE and TsaB. TsaD likely plays a direct catalytic role in this reaction. The protein is tRNA N6-adenosine threonylcarbamoyltransferase of Parasynechococcus marenigrum (strain WH8102).